Consider the following 802-residue polypeptide: Fibroblast growth factor receptor 4 (802 aa).

The first 21 residues, 1 to 21 (MRLLLALLGVLLSVPGPPVLS), serve as a signal peptide directing secretion. The Ig-like C2-type 1 domain occupies 22–118 (LEASEEVELE…VLQNLTLITG (97 aa)). The Extracellular segment spans residues 22-369 (LEASEEVELE…AAAPEARYTD (348 aa)). The cysteines at positions 57 and 101 are disulfide-linked. N112 is a glycosylation site (N-linked (GlcNAc...) asparagine). A disordered region spans residues 119-148 (DSLTSSNDDEDPKSHRDPSNRHSYPQQAPY). Ig-like C2-type domains are found at residues 152 to 240 (PQRM…YLLD) and 249 to 349 (PILQ…AWLT). C172 and C224 are oxidised to a cystine. 4 N-linked (GlcNAc...) asparagine glycosylation sites follow: N258, N290, N311, and N322. A disulfide bond links C271 and C333. A helical membrane pass occupies residues 370 to 390 (IILYASGSLALAVLLLLAGLY). Phosphotyrosine; in variant R-388 is present on Y390. Residues 391–802 (RGQALHGRHP…SFPFGSGVQT (412 aa)) are Cytoplasmic-facing. Positions 467-755 (LVLGKPLGEG…VLLAVSEEYL (289 aa)) constitute a Protein kinase domain. ATP-binding positions include 473-481 (LGEGCFGQV) and K503. S573 is modified (phosphoserine). The Proton acceptor role is filled by D612. Y642, Y643, and Y754 each carry phosphotyrosine; by autocatalysis.

Belongs to the protein kinase superfamily. Tyr protein kinase family. Fibroblast growth factor receptor subfamily. As to quaternary structure, monomer. Homodimer after ligand binding. Interacts with FGF1, FGF2, FGF4, FGF6, FGF8, FGF9, FGF16, FGF17, FGF18, FGF19, FGF21 and FGF23 (in vitro). Binding affinity for FGF family members is enhanced by interactions between FGFs and heparan sulfate proteoglycans. Interacts with KLB; this strongly increases the affinity for FGF19 and FGF23. Affinity for FGF19 is strongly increased by KLB and sulfated glycosaminoglycans. KLB and KL both interact with the core-glycosylated FGFR4 in the endoplasmic reticulum and promote its degradation, so that only FGFR4 with fully mature N-glycans is expressed at the cell surface. Identified in a complex with NCAM1, CDH2, PLCG1, FRS2, SRC, SHC1, GAP43 and CTTN. Interacts with MMP14 and HIP1. Interacts with STAT3. N-glycosylated. Full maturation of the glycan chains in the Golgi is essential for high affinity interaction with FGF19. In terms of processing, ubiquitinated. Subject to proteasomal degradation when not fully glycosylated. Post-translationally, autophosphorylated. Binding of FGF family members together with heparan sulfate proteoglycan or heparin promotes receptor dimerization and autophosphorylation on tyrosine residues. Autophosphorylation occurs in trans between the two FGFR molecules present in the dimer. Expressed in gastrointestinal epithelial cells, pancreas, and gastric and pancreatic cancer cell lines.

Its subcellular location is the cell membrane. The protein localises to the endosome. It localises to the endoplasmic reticulum. It is found in the secreted. The catalysed reaction is L-tyrosyl-[protein] + ATP = O-phospho-L-tyrosyl-[protein] + ADP + H(+). Present in an inactive conformation in the absence of bound ligand. Ligand binding leads to dimerization and activation by autophosphorylation on tyrosine residues. In terms of biological role, tyrosine-protein kinase that acts as a cell-surface receptor for fibroblast growth factors and plays a role in the regulation of cell proliferation, differentiation and migration, and in regulation of lipid metabolism, bile acid biosynthesis, glucose uptake, vitamin D metabolism and phosphate homeostasis. Required for normal down-regulation of the expression of CYP7A1, the rate-limiting enzyme in bile acid synthesis, in response to FGF19. Phosphorylates PLCG1 and FRS2. Ligand binding leads to the activation of several signaling cascades. Activation of PLCG1 leads to the production of the cellular signaling molecules diacylglycerol and inositol 1,4,5-trisphosphate. Phosphorylation of FRS2 triggers recruitment of GRB2, GAB1, PIK3R1 and SOS1, and mediates activation of RAS, MAPK1/ERK2, MAPK3/ERK1 and the MAP kinase signaling pathway, as well as of the AKT1 signaling pathway. Promotes SRC-dependent phosphorylation of the matrix protease MMP14 and its lysosomal degradation. FGFR4 signaling is down-regulated by receptor internalization and degradation; MMP14 promotes internalization and degradation of FGFR4. Mutations that lead to constitutive kinase activation or impair normal FGFR4 inactivation lead to aberrant signaling. This Homo sapiens (Human) protein is Fibroblast growth factor receptor 4 (FGFR4).